We begin with the raw amino-acid sequence, 227 residues long: 7-cyano-7-deazaguanine synthase (227 aa).

8 to 18 (VSGGADSATVL) provides a ligand contact to ATP. 4 residues coordinate Zn(2+): Cys192, Cys202, Cys205, and Cys208.

This sequence belongs to the QueC family. Zn(2+) serves as cofactor.

It carries out the reaction 7-carboxy-7-deazaguanine + NH4(+) + ATP = 7-cyano-7-deazaguanine + ADP + phosphate + H2O + H(+). It participates in purine metabolism; 7-cyano-7-deazaguanine biosynthesis. Functionally, catalyzes the ATP-dependent conversion of 7-carboxy-7-deazaguanine (CDG) to 7-cyano-7-deazaguanine (preQ(0)). The protein is 7-cyano-7-deazaguanine synthase of Rickettsia akari (strain Hartford).